We begin with the raw amino-acid sequence, 570 residues long: Periplasmic trehalase (570 aa).

The N-terminal stretch at 1-34 (MIPPEIRRSVLLQKAIKLALAGTLLTFASFSATA) is a signal peptide. Residues Arg-159, 166 to 167 (WD), Asn-203, 212 to 214 (RSQ), 284 to 286 (RPE), and Gly-317 contribute to the substrate site. Active-site proton donor/acceptor residues include Asp-319 and Glu-503. A substrate-binding site is contributed by Glu-518. Residues 544 to 570 (KPCDSVPSTRPASLSATPTKTPSAATQ) are disordered. Over residues 554–570 (PASLSATPTKTPSAATQ) the composition is skewed to low complexity.

The protein belongs to the glycosyl hydrolase 37 family. Monomer.

Its subcellular location is the periplasm. It catalyses the reaction alpha,alpha-trehalose + H2O = alpha-D-glucose + beta-D-glucose. Functionally, provides the cells with the ability to utilize trehalose at high osmolarity by splitting it into glucose molecules that can subsequently be taken up by the phosphotransferase-mediated uptake system. This is Periplasmic trehalase from Salmonella paratyphi A (strain AKU_12601).